The sequence spans 343 residues: S-adenosylmethionine:tRNA ribosyltransferase-isomerase (343 aa).

This sequence belongs to the QueA family. In terms of assembly, monomer.

It localises to the cytoplasm. The catalysed reaction is 7-aminomethyl-7-carbaguanosine(34) in tRNA + S-adenosyl-L-methionine = epoxyqueuosine(34) in tRNA + adenine + L-methionine + 2 H(+). Its pathway is tRNA modification; tRNA-queuosine biosynthesis. Functionally, transfers and isomerizes the ribose moiety from AdoMet to the 7-aminomethyl group of 7-deazaguanine (preQ1-tRNA) to give epoxyqueuosine (oQ-tRNA). In Dehalococcoides mccartyi (strain ATCC BAA-2100 / JCM 16839 / KCTC 5957 / BAV1), this protein is S-adenosylmethionine:tRNA ribosyltransferase-isomerase.